Reading from the N-terminus, the 634-residue chain is Zinc finger and BTB domain-containing protein 22 (634 aa).

The 65-residue stretch at 57–121 folds into the BTB domain; sequence CDVSIRVQGR…AYTGRLSMAA (65 aa). Disordered regions lie at residues 167–247 and 308–461; these read TVPG…APVV and APTP…GTSV. Residues 180–198 show a composition bias toward low complexity; that stretch reads TVAPATMGSARSHASSRAS. A compositionally biased stretch (polar residues) spans 199-209; that stretch reads ENQSPSSSNYF. At serine 202 the chain carries Phosphoserine. Low complexity predominate over residues 217–229; that stretch reads FSSSSQEAFAASA. Residues 317–340 show a composition bias toward acidic residues; the sequence is PDLEEEEEEEDLVLTCEDDEDEEL. The span at 452-461 shows a compositional bias: low complexity; sequence GAVTVGGTSV. The C2H2-type 1; atypical zinc finger occupies 486–507; it reads FLCHCGKAFSHKSMRDRHVNMH. 2 consecutive C2H2-type zinc fingers follow at residues 513 to 535 and 541 to 562; these read FDCP…MKTH and YECG…HRGH. Residues 568–634 are disordered; the sequence is RLGGVGAVPG…MGFGGGGGAN (67 aa). A compositionally biased stretch (low complexity) spans 608–618; sequence PPSSRRVWSPP.

It belongs to the krueppel C2H2-type zinc-finger protein family.

The protein localises to the nucleus. Its function is as follows. May be involved in transcriptional regulation. In Homo sapiens (Human), this protein is Zinc finger and BTB domain-containing protein 22 (ZBTB22).